The primary structure comprises 622 residues: E3 ubiquitin-protein ligase hrd-1 (622 aa).

Positions 1–23 (MRVSAGLMIGGSCVATAATVLNA) are cleaved as a signal peptide. Residues 24 to 41 (FVINKQFYPSIVYLSKSN) are Lumenal-facing. Residues 42–62 (ASMAVLYFQGIVLVYLMFQLL) traverse the membrane as a helical segment. The Cytoplasmic segment spans residues 63 to 99 (KSILFGDLRAAEAEHLSERTWHAVLETCLAFTVFRDD). A helical transmembrane segment spans residues 100–120 (FSAMFVMQFIGLLFIKCFHWL). The Lumenal segment spans residues 121-141 (ADDRVDMMERSPVITLRFHLR). A helical membrane pass occupies residues 142-162 (MMTVLAALGFADSYFVSSAYF). Over 163–170 (STITKGAS) the chain is Cytoplasmic. A helical membrane pass occupies residues 171–191 (SQIVFGFEYAILLALVLHVTI). Residues 192–215 (KYLLHMHDLRNPQSWDNKAVYLLY) lie on the Lumenal side of the membrane. Residues 216-236 (AELLINLIRCVLYGFFAVIML) form a helical membrane-spanning segment. Residues 237 to 622 (RVHTFPLFSV…RFPPPNPEHE (386 aa)) are Cytoplasmic-facing. Residues 292–333 (CIICREEMTVESSPKRLPCSHVFHAHCLRSWFQRQQTCPTCR) form an RING-type; atypical zinc finger. Positions 436-445 (MPPPPIPQPN) are enriched in pro residues. 2 disordered regions span residues 436–463 (MPPP…PNFD) and 514–622 (PVPT…PEHE). Over residues 526–538 (ATASSVPTSVPSE) the composition is skewed to low complexity. Polar residues predominate over residues 562 to 577 (FNDTQSTSTPSTSAGP). Positions 579–596 (PSLTPSTSSVPSTSSVRT) are enriched in low complexity.

This sequence belongs to the HRD1 family. As to quaternary structure, homodimer.

The protein localises to the endoplasmic reticulum membrane. It catalyses the reaction S-ubiquitinyl-[E2 ubiquitin-conjugating enzyme]-L-cysteine + [acceptor protein]-L-lysine = [E2 ubiquitin-conjugating enzyme]-L-cysteine + N(6)-ubiquitinyl-[acceptor protein]-L-lysine.. It functions in the pathway protein modification; protein ubiquitination. Acts as an E3 ubiquitin-protein ligase which accepts ubiquitin specifically from endoplasmic reticulum-associated ubc-7 E2 ligase and transfers it to substrates, promoting their degradation. Component of the endoplasmic reticulum quality control (ERQC) system, which is also called the ER-associated degradation (ERAD) system, involved in ubiquitin-dependent degradation of misfolded endoplasmic reticulum proteins. Also promotes the degradation of normal but naturally short-lived proteins. Protects cells from ER stress-induced apoptosis. Thought to play a role together with hsp-3 in developmental growth and function of intestinal cells and to play a role together with hsp-4 in gonad formation. The polypeptide is E3 ubiquitin-protein ligase hrd-1 (Caenorhabditis briggsae).